The sequence spans 279 residues: Putative pyruvate, phosphate dikinase regulatory protein (279 aa).

ADP is bound at residue 153 to 160; that stretch reads GISRTSKT.

Belongs to the pyruvate, phosphate/water dikinase regulatory protein family. PDRP subfamily.

The enzyme catalyses N(tele)-phospho-L-histidyl/L-threonyl-[pyruvate, phosphate dikinase] + ADP = N(tele)-phospho-L-histidyl/O-phospho-L-threonyl-[pyruvate, phosphate dikinase] + AMP + H(+). It carries out the reaction N(tele)-phospho-L-histidyl/O-phospho-L-threonyl-[pyruvate, phosphate dikinase] + phosphate + H(+) = N(tele)-phospho-L-histidyl/L-threonyl-[pyruvate, phosphate dikinase] + diphosphate. Functionally, bifunctional serine/threonine kinase and phosphorylase involved in the regulation of the pyruvate, phosphate dikinase (PPDK) by catalyzing its phosphorylation/dephosphorylation. The sequence is that of Putative pyruvate, phosphate dikinase regulatory protein from Brucella melitensis biotype 2 (strain ATCC 23457).